The following is a 235-amino-acid chain: Octanoyltransferase (235 aa).

In terms of domain architecture, BPL/LPL catalytic spans 37–220; that stretch reads AGGPDTLLLL…AVNDALDGWL (184 aa). Substrate is bound by residues 78–85, 150–152, and 163–165; these read RGGKITWH, AIG, and GFA. Cys181 acts as the Acyl-thioester intermediate in catalysis.

This sequence belongs to the LipB family.

The protein localises to the cytoplasm. The catalysed reaction is octanoyl-[ACP] + L-lysyl-[protein] = N(6)-octanoyl-L-lysyl-[protein] + holo-[ACP] + H(+). Its pathway is protein modification; protein lipoylation via endogenous pathway; protein N(6)-(lipoyl)lysine from octanoyl-[acyl-carrier-protein]: step 1/2. Functionally, catalyzes the transfer of endogenously produced octanoic acid from octanoyl-acyl-carrier-protein onto the lipoyl domains of lipoate-dependent enzymes. Lipoyl-ACP can also act as a substrate although octanoyl-ACP is likely to be the physiological substrate. The chain is Octanoyltransferase from Mycobacterium leprae (strain Br4923).